Reading from the N-terminus, the 901-residue chain is Protein translocase subunit SecA (901 aa).

Residues Q89, 107–111 (GEGKT), and D502 each bind ATP. The Zn(2+) site is built by C884, C886, C895, and H896.

Belongs to the SecA family. As to quaternary structure, monomer and homodimer. Part of the essential Sec protein translocation apparatus which comprises SecA, SecYEG and auxiliary proteins SecDF-YajC and YidC. Zn(2+) is required as a cofactor.

The protein localises to the cell inner membrane. It localises to the cytoplasm. The catalysed reaction is ATP + H2O + cellular proteinSide 1 = ADP + phosphate + cellular proteinSide 2.. In terms of biological role, part of the Sec protein translocase complex. Interacts with the SecYEG preprotein conducting channel. Has a central role in coupling the hydrolysis of ATP to the transfer of proteins into and across the cell membrane, serving both as a receptor for the preprotein-SecB complex and as an ATP-driven molecular motor driving the stepwise translocation of polypeptide chains across the membrane. This is Protein translocase subunit SecA from Sinorhizobium fredii (strain NBRC 101917 / NGR234).